The chain runs to 536 residues: Thiamine transport system permease protein ThiP (536 aa).

Transmembrane regions (helical) follow at residues 16-36 (GLCAAALMITVSLAAFLALWL), 58-78 (FSFWQAFLSAVLSVVPAVFLA), 95-115 (LCAMTLILPVLVAVFGILSVY), 134-154 (FSPYGLQGILLAHVFFNLPMA), 199-219 (VAALIFMLCFASFATVLSLGG), 240-260 (PARAAMLALIQMVCCLALVLL), 291-311 (DALLIVLALLLLLPPLVAVVV), 334-354 (SLRIALAAGVLCVVLTMMLLW), 373-393 (LSGMLILAMPGIVLATGFFLL), 404-424 (ADGIVIFTNALMAIPYALKVL), 463-483 (AQALAFACVLSIGDFGVVALF), and 506-526 (DGAVTALILLLLCFTLFTLIE). Residues 56 to 261 (VRFSFWQAFL…VCCLALVLLS (206 aa)) form the ABC transmembrane type-1 1 domain. An ABC transmembrane type-1 2 domain is found at 331 to 525 (VWTSLRIALA…LLCFTLFTLI (195 aa)).

It belongs to the binding-protein-dependent transport system permease family. As to quaternary structure, the complex is composed of two ATP-binding proteins (ThiQ), two transmembrane proteins (ThiP) and a solute-binding protein (ThiB).

It localises to the cell inner membrane. Functionally, part of the ABC transporter complex ThiBPQ involved in thiamine import. Probably responsible for the translocation of the substrate across the membrane. Is also involved in thiamine pyrophosphate transport. The sequence is that of Thiamine transport system permease protein ThiP from Salmonella typhimurium (strain LT2 / SGSC1412 / ATCC 700720).